Here is a 514-residue protein sequence, read N- to C-terminus: Serine--tRNA ligase, cytoplasmic (514 aa).

Methionine 1 is modified (N-acetylmethionine). The interval 9–61 is interaction with tRNA; that stretch reads RVDKGGDPALIRETQEKRFKDPGLVDQLVKADSEWRRCRFRADNLNKLKNLCS. The residue at position 241 (serine 241) is a Phosphoserine. The L-serine site is built by threonine 271 and arginine 302. ATP contacts are provided by residues 302 to 304 and 318 to 321; these read RQE and VHQF. The residue at position 323 (lysine 323) is an N6-acetyllysine. Glutamate 325 contributes to the L-serine binding site. 391–394 contributes to the ATP binding site; the sequence is ELVS. Asparagine 427 lines the L-serine pocket. The segment at 471–514 is disordered; sequence VKPAPIDQEPSKKQKKQHEGSKKKAAARDVALESRLQNMEVTDA. A compositionally biased stretch (basic and acidic residues) spans 479 to 502; that stretch reads EPSKKQKKQHEGSKKKAAARDVAL. The short motif at 482-494 is the Nuclear localization signal element; the sequence is KKQKKQHEGSKKK. Over residues 505-514 the composition is skewed to polar residues; sequence RLQNMEVTDA.

This sequence belongs to the class-II aminoacyl-tRNA synthetase family. Type-1 seryl-tRNA synthetase subfamily. In terms of assembly, homodimer. The tRNA molecule may bind across the dimer. Interacts with SIRT2. Interacts with METTL6; interaction is required for the tRNA N(3)-methylcytidine methyltransferase activity of METTL6.

It localises to the cytoplasm. The protein resides in the nucleus. It catalyses the reaction tRNA(Ser) + L-serine + ATP = L-seryl-tRNA(Ser) + AMP + diphosphate + H(+). The enzyme catalyses tRNA(Sec) + L-serine + ATP = L-seryl-tRNA(Sec) + AMP + diphosphate + H(+). It participates in aminoacyl-tRNA biosynthesis; selenocysteinyl-tRNA(Sec) biosynthesis; L-seryl-tRNA(Sec) from L-serine and tRNA(Sec): step 1/1. Functionally, catalyzes the attachment of serine to tRNA(Ser) in a two-step reaction: serine is first activated by ATP to form Ser-AMP and then transferred to the acceptor end of tRNA(Ser). Is probably also able to aminoacylate tRNA(Sec) with serine, to form the misacylated tRNA L-seryl-tRNA(Sec), which will be further converted into selenocysteinyl-tRNA(Sec). In the nucleus, binds to the VEGFA core promoter and prevents MYC binding and transcriptional activation by MYC. Recruits SIRT2 to the VEGFA promoter, promoting deacetylation of histone H4 at 'Lys-16' (H4K16). Thereby, inhibits the production of VEGFA and sprouting angiogenesis mediated by VEGFA. This is Serine--tRNA ligase, cytoplasmic (SARS1) from Macaca fascicularis (Crab-eating macaque).